The following is a 929-amino-acid chain: Bifunctional uridylyltransferase/uridylyl-removing enzyme (929 aa).

The tract at residues 1 to 379 is uridylyltransferase; the sequence is MSPSRPAADE…RPAAKRRRVP (379 aa). The tract at residues 380–735 is uridylyl-removing; that stretch reads ESDDFVIDNN…VGFDEARAVT (356 aa). Positions 495-618 constitute an HD domain; that stretch reads VDEHLIRCVG…VETVEQMKML (124 aa). ACT domains follow at residues 736 to 818 and 849 to 929; these read ELTI…AVAR and VIEV…KPAA.

It belongs to the GlnD family. It depends on Mg(2+) as a cofactor.

It carries out the reaction [protein-PII]-L-tyrosine + UTP = [protein-PII]-uridylyl-L-tyrosine + diphosphate. The catalysed reaction is [protein-PII]-uridylyl-L-tyrosine + H2O = [protein-PII]-L-tyrosine + UMP + H(+). Its activity is regulated as follows. Uridylyltransferase (UTase) activity is inhibited by glutamine, while glutamine activates uridylyl-removing (UR) activity. Modifies, by uridylylation and deuridylylation, the PII regulatory proteins (GlnB and homologs), in response to the nitrogen status of the cell that GlnD senses through the glutamine level. Under low glutamine levels, catalyzes the conversion of the PII proteins and UTP to PII-UMP and PPi, while under higher glutamine levels, GlnD hydrolyzes PII-UMP to PII and UMP (deuridylylation). Thus, controls uridylylation state and activity of the PII proteins, and plays an important role in the regulation of nitrogen fixation and metabolism. The chain is Bifunctional uridylyltransferase/uridylyl-removing enzyme from Rhodopseudomonas palustris (strain ATCC BAA-98 / CGA009).